The sequence spans 357 residues: Glycerol-1-phosphate dehydrogenase [NAD(P)+] (357 aa).

NAD(+) contacts are provided by residues 104 to 108 (GKTID) and 126 to 129 (TAAS). Asp-131 contacts substrate. An NAD(+)-binding site is contributed by Ser-135. Asp-178 is a binding site for substrate. The Zn(2+) site is built by Asp-178 and His-258. Position 262 (His-262) interacts with substrate. Residue His-274 coordinates Zn(2+).

Belongs to the glycerol-1-phosphate dehydrogenase family. It depends on Zn(2+) as a cofactor.

Its subcellular location is the cytoplasm. The enzyme catalyses sn-glycerol 1-phosphate + NAD(+) = dihydroxyacetone phosphate + NADH + H(+). The catalysed reaction is sn-glycerol 1-phosphate + NADP(+) = dihydroxyacetone phosphate + NADPH + H(+). It functions in the pathway membrane lipid metabolism; glycerophospholipid metabolism. Functionally, catalyzes the NAD(P)H-dependent reduction of dihydroxyacetonephosphate (DHAP or glycerone phosphate) to glycerol 1-phosphate (G1P). The G1P thus generated is used as the glycerophosphate backbone of phospholipids in the cellular membranes of Archaea. The protein is Glycerol-1-phosphate dehydrogenase [NAD(P)+] of Methanococcoides burtonii (strain DSM 6242 / NBRC 107633 / OCM 468 / ACE-M).